Here is a 4561-residue protein sequence, read N- to C-terminus: StAR-related lipid transfer protein 9 (4561 aa).

Residues 3–384 form the Kinesin motor domain; sequence NVQVAVRVRP…MRYASNAKNI (382 aa). 103–110 serves as a coordination point for ATP; that stretch reads GQTGSGKT. Low complexity predominate over residues 307-321; it reads SSGGDSGVPSTTSGA. Residues 307–330 form a disordered region; sequence SSGGDSGVPSTTSGASSGGGPARR. The region spanning 482–533 is the FHA domain; that stretch reads TKIGRIDSDQEQDIVLQGQWIERDHCTITSTCGVVILRPTQGARCTVNGREV. Disordered stretches follow at residues 784–805, 873–1064, and 1092–1153; these read SRAP…RRSR, SRWR…DTES, and WNLP…PSDS. Polar residues-rich tracts occupy residues 789-805, 884-903, 911-920, and 939-948; these read WASS…RRSR, ASTQ…SQEI, CQMSSQGQST, and RWASVNTKTG. 2 stretches are compositionally biased toward basic and acidic residues: residues 1046-1060 and 1124-1135; these read RPIK…RDLS and SRGEYSMKDHGH. The residue at position 1164 (S1164) is a Phosphoserine. Disordered regions lie at residues 1288 to 1392, 1700 to 1767, 1959 to 1980, 2077 to 2120, 2320 to 2356, 2384 to 2427, 2439 to 2467, 2622 to 2656, 2712 to 2735, 2777 to 2800, 3002 to 3067, 3185 to 3207, 3246 to 3286, 3645 to 3703, 3790 to 3847, and 3863 to 3913; these read PSGD…SDMS, REAW…EEEN, ECKA…EEKQ, TNAT…ADRL, LATG…LGGS, VSTS…SSLD, FLLQ…LPNS, KPRQ…DPLP, KDSI…SEKI, TGLE…GNVG, RSVE…PGTL, AQTE…REQL, ELNL…TSLK, EGAA…LRPE, SDLA…PQQS, and QPKT…GRTT. Over residues 1300–1321 the composition is skewed to basic and acidic residues; sequence DIHEIQPHDEKPKHWLSIEEPK. Polar residues-rich tracts occupy residues 1328-1360 and 1722-1741; these read LPQS…SQGL and PKLS…TTTK. Basic and acidic residues-rich tracts occupy residues 1754–1767 and 1970–1980; these read ELGK…EEEN and QSKEEPLEEKQ. The span at 2077–2091 shows a compositional bias: polar residues; that stretch reads TNATSNNNTQIQKLT. Over residues 2096 to 2110 the composition is skewed to basic and acidic residues; it reads RSREYVQTRESESEH. 2 stretches are compositionally biased toward polar residues: residues 2333–2351 and 2399–2408; these read TRSS…TTHT and TSTGSTTQEA. A coiled-coil region spans residues 2414–2463; sequence EATVQKERKNSSLDRISRQAEKRVSFLLQEDSNQGEEERQKAEETSEDQQ. A compositionally biased stretch (basic and acidic residues) spans 2417-2427; that stretch reads VQKERKNSSLD. Residues 2634 to 2647 show a composition bias toward basic and acidic residues; that stretch reads DSSEVIEKRKEASR. Composition is skewed to polar residues over residues 3039–3054 and 3187–3199; these read LKNN…SQTM and TEPS…THSQ. The segment covering 3689 to 3700 has biased composition (pro residues); it reads PASPDGSPPPSL. The segment covering 3812-3835 has biased composition (basic and acidic residues); that stretch reads DSQRAESLDREGKSPLGKSSERLL. The segment covering 3863–3874 has biased composition (polar residues); sequence QPKTTTGDQSKL. Residues 4185–4224 are a coiled coil; the sequence is SDIELMLQEYRRAREEAKVEIAQARDRLKERTEQEKMRIR. The START domain occupies 4344–4561; that stretch reads PYQDLAKHIV…VAKLASFLRS (218 aa).

This sequence belongs to the TRAFAC class myosin-kinesin ATPase superfamily. Kinesin family. In terms of assembly, interacts with ATAD3A.

It is found in the cytoplasm. It localises to the cytoskeleton. Its subcellular location is the microtubule organizing center. The protein resides in the centrosome. The protein localises to the centriole. It is found in the nucleus. Functionally, microtubule-dependent motor protein required for spindle pole assembly during mitosis. Required to stabilize the pericentriolar material (PCM). This is StAR-related lipid transfer protein 9 (Stard9) from Mus musculus (Mouse).